A 263-amino-acid polypeptide reads, in one-letter code: Tropinone reductase homolog At2g29300 (263 aa).

13–37 contacts NADP(+); the sequence is LVTGAASGIGYAIVEELAGFGARIH. Residue serine 146 participates in substrate binding. The active-site Proton acceptor is the tyrosine 160.

Belongs to the short-chain dehydrogenases/reductases (SDR) family. SDR65C subfamily.

This is Tropinone reductase homolog At2g29300 from Arabidopsis thaliana (Mouse-ear cress).